The chain runs to 646 residues: Serine/threonine-protein kinase max-2 (646 aa).

The disordered stretch occupies residues 19 to 40; it reads FSPSDKDKDRDDEMKPSSSAMD. Residues 22–33 are compositionally biased toward basic and acidic residues; it reads SDKDKDRDDEMK. In terms of domain architecture, CRIB spans 41–54; the sequence is ISQPYNTVHRVHVG. The segment at 136–345 is disordered; that stretch reads LQCSNGSATS…PPPPEEPPVR (210 aa). 2 stretches are compositionally biased toward low complexity: residues 142-157 and 167-180; these read SATSPSTSVSASSSSA and LSTASSTDTSLSLS. The span at 196-205 shows a compositional bias: polar residues; sequence SAPQLKTFTG. The segment covering 214–223 has biased composition (pro residues); sequence SPFPPQPPVL. Low complexity predominate over residues 229–245; the sequence is TASAVATTTTNPTTSNG. Positions 246 to 262 are enriched in pro residues; that stretch reads APPPVPGSKGPPVPPKP. Low complexity-rich tracts occupy residues 273–307 and 323–334; these read SSGCSSPQQYSSARSVGNSLSNGSVVSTTSSDGDV and KNGNTTTNKTTV. Residues 376–627 enclose the Protein kinase domain; the sequence is YEMKKQIGVG…TTELLAHPFL (252 aa). Residues 382-390 and K405 contribute to the ATP site; that span reads IGVGASGTV. The Proton acceptor role is filled by D496.

The protein belongs to the protein kinase superfamily. STE Ser/Thr protein kinase family. STE20 subfamily. Interacts with mlk-1; the interaction is independent of max-2 and mlk-1 kinase activities. Interacts with mig-2 (GTP-bound form). Requires Mg(2+) as cofactor.

It localises to the perikaryon. The protein localises to the cell projection. Its subcellular location is the dendrite. It is found in the cytoplasm. It catalyses the reaction L-seryl-[protein] + ATP = O-phospho-L-seryl-[protein] + ADP + H(+). The catalysed reaction is L-threonyl-[protein] + ATP = O-phospho-L-threonyl-[protein] + ADP + H(+). Its function is as follows. Serine/threonine-protein kinase, which phosphorylates mlk-1. Involved in the stress response to heavy metals by activating the mlk-1/mek-1/kgb-1 pathway. In ventral cord commissural motoneurons, required for dorsal axon guidance downstream of unc-6/netrin repulsion receptor unc-5 and probably of Rho GTPases ced-10 and mig-2. Plays a redundant role with mig-10 in orientating axonal growth of HSN neurons. Plays a redundant role with pak-1 in P neuroblast migration and in distal tip cell (DTC)-mediated guidance of gonad elongation probably downstream of Rho GTPases. In association with pak-2, plays a role in embryogenesis. In association with pak-1, may be involved in spermatogenesis. This chain is Serine/threonine-protein kinase max-2, found in Caenorhabditis elegans.